A 444-amino-acid polypeptide reads, in one-letter code: Tol-Pal system protein TolB (444 aa).

The signal sequence occupies residues 1–18 (MRNIIYFILLLFSCTGYA).

This sequence belongs to the TolB family. The Tol-Pal system is composed of five core proteins: the inner membrane proteins TolA, TolQ and TolR, the periplasmic protein TolB and the outer membrane protein Pal. They form a network linking the inner and outer membranes and the peptidoglycan layer.

The protein resides in the periplasm. Part of the Tol-Pal system, which plays a role in outer membrane invagination during cell division and is important for maintaining outer membrane integrity. In Rickettsia canadensis (strain McKiel), this protein is Tol-Pal system protein TolB.